Reading from the N-terminus, the 572-residue chain is Nucleolin 1 (572 aa).

2 disordered regions span residues Met-1 to Thr-312 and Asp-488 to Glu-572. Low complexity predominate over residues Lys-7–Lys-21. A compositionally biased stretch (basic and acidic residues) spans Lys-27–Val-38. 2 stretches are compositionally biased toward low complexity: residues Ala-45–Lys-58 and Lys-72–Ser-81. Acidic residues-rich tracts occupy residues Ser-82 to Glu-91, Ser-109 to Asp-122, Ser-144 to Glu-156, Asp-177 to Asp-191, Ser-208 to Asp-222, Ser-235 to Asp-247, and Glu-261 to Glu-276. Residues Pro-300–Ala-311 show a composition bias toward polar residues. RRM domains follow at residues Ala-311 to Glu-387 and Gln-411 to Pro-492. 2 stretches are compositionally biased toward basic and acidic residues: residues Asp-488–Gly-520 and Gly-528–Arg-545. Residues Gln-553 to Lys-566 are compositionally biased toward polar residues.

Its subcellular location is the nucleus. It is found in the nucleolus. Its function is as follows. Involved in pre-rRNA processing and ribosome assembly. This Oryza sativa subsp. japonica (Rice) protein is Nucleolin 1.